The following is a 489-amino-acid chain: HFKPILVLCLATLALGLFVPHFAADRNSIVHLFEWKWSDIADECERFLAPKGFGGVQISPPNENLVVTSSNRPWWERYQPVSYILNTRSGDEAALADMISRCNAVGVRIYVDTVINHMTGMGGTGTAGSQADRDGKNYPAVPYGSGDFHDSCTVNNYQDASNVRNCELVGLADLNQGSDYVRSKIIEYMNHLVDLGVAGFRVDAAKHMWPADLEAIYASLKNLNTDHGFLDGQKPFIFQEVIDLGGEAISKHEYTGFGTVIEFQYGLSLGNAFQGGNQLANLANWGPEWNLLDGLDAVAFIDNHDNQRTGGSQILTYKNPKPYKMAIAFMLAHPYGTTRLMSSFAFDNNDQGPPQDDAGNLISPSINDDGTCGNGYVCEHRWRQIFNMVGFRNAVQGTGIENWWSDGNQQIAFGRGNKGFVAFTIGYDLNQHLQTGLPAGSYCDVISGNAENGSCSGKTITVGGDGYADISLGANEDDGVIAIHVNAKL.

The signal sequence occupies residues 1-16 (HFKPILVLCLATLALG). C44 and C102 are oxidised to a cystine. Residues N116, R164, and D173 each coordinate Ca(2+). A disulfide bridge connects residues C152 and C166. R201 contacts chloride. D203 (nucleophile) is an active-site residue. Position 207 (H207) interacts with Ca(2+). Catalysis depends on E240, which acts as the Proton donor. Residues N303 and R339 each coordinate chloride. Disulfide bonds link C372–C378 and C443–C455.

It belongs to the glycosyl hydrolase 13 family. In terms of assembly, monomer. Ca(2+) is required as a cofactor. Requires chloride as cofactor.

The catalysed reaction is Endohydrolysis of (1-&gt;4)-alpha-D-glucosidic linkages in polysaccharides containing three or more (1-&gt;4)-alpha-linked D-glucose units.. The protein is Alpha-amylase of Tribolium castaneum (Red flour beetle).